We begin with the raw amino-acid sequence, 273 residues long: Ribosomal RNA small subunit methyltransferase A (273 aa).

The S-adenosyl-L-methionine site is built by N18, L20, G45, E66, D91, and N113.

It belongs to the class I-like SAM-binding methyltransferase superfamily. rRNA adenine N(6)-methyltransferase family. RsmA subfamily.

It is found in the cytoplasm. It carries out the reaction adenosine(1518)/adenosine(1519) in 16S rRNA + 4 S-adenosyl-L-methionine = N(6)-dimethyladenosine(1518)/N(6)-dimethyladenosine(1519) in 16S rRNA + 4 S-adenosyl-L-homocysteine + 4 H(+). Specifically dimethylates two adjacent adenosines (A1518 and A1519) in the loop of a conserved hairpin near the 3'-end of 16S rRNA in the 30S particle. May play a critical role in biogenesis of 30S subunits. The chain is Ribosomal RNA small subunit methyltransferase A from Shigella boydii serotype 4 (strain Sb227).